The sequence spans 685 residues: MALKPLNNIWIRRQQCPCGDWKCYIRLEEDESTITKSEIESTPTPTSQYDTVFTPYVGQIFTTDDEAFEYYSTFARKSGFSIRKARSTESQNLGVYRRDFVCYRSGFNQPRKKANVEHPRERKSVRCGCDGKLYLTKEVVDGVSHWYVSQFSNVHNHELLEDDQVRLLPAYRKIQQSDQERILLLSKAGFPVNRIVKLLELEKGVVSGQLPFIEKDVRNFVRACKKSVQENDAFMTEKRESDTLELLECCKGLAERDMDFVYDCTSDENQKVENIAWAYGDSVRGYSLFGDVVVFDTSYRSVPYGLLLGVFFGIDNNGKAMLLGCVLLQDESCRSFTWALQTFVRFMRGRHPQTILTDIDTGLKDAIGREMPNTNHVVFMSHIVSKLASWFSQTLGSHYEEFRAGFDMLCRAGNVDEFEQQWDLLVTRFGLVPDRHAALLYSCRASWLPCCIREHFVAQTMTSEFNLSIDSFLKRVVDGATCMQLLLEESALQVSAAASLAKQILPRFTYPSLKTCMPMEDHARGILTPYAFSVLQNEMVLSVQYAVAEMANGPFIVHHYKKMEGECCVIWNPENEEIQCSCKEFEHSGILCRHTLRVLTVKNCFHIPEQYFLLRWRQESPHVATENQNGQGIGDDSAQTFHSLTETLLTESMISKDRLDYANQELSLLIDRVRNTAPANCLYQP.

Positions 69 to 161 constitute an FAR1 domain; sequence EYYSTFARKS…SNVHNHELLE (93 aa). The MULE domain occupies 292–388; that stretch reads VVVFDTSYRS…FMSHIVSKLA (97 aa). The SWIM-type zinc-finger motif lies at 565–603; the sequence is GECCVIWNPENEEIQCSCKEFEHSGILCRHTLRVLTVKN.

It belongs to the FHY3/FAR1 family.

The polypeptide is Putative protein FAR1-RELATED SEQUENCE 10 (FRS10) (Arabidopsis thaliana (Mouse-ear cress)).